Consider the following 211-residue polypeptide: MTPWLGLVVLLGSWSLGDWGAEACTCSPSHPQDAFCNSDIVIRAKVVGKKLVKEGPFGTLVYTIKQMKMYRGFTKMPHVQYIHTEASESLCGLKLEVNKYQYLLTGRVYDGKMYTGLCNFVERWDQLTLSQRKGLNYRYHLGCNCKIKSCYYLPCYVTSKNECLWTDMLSNFGYPGYQSKHYACIRQKGGYCSWYRGWAPPDKSIINATDP.

Positions 1-23 (MTPWLGLVVLLGSWSLGDWGAEA) are cleaved as a signal peptide. Residue Cys24 coordinates Zn(2+). Involved in metalloproteinase-binding stretches follow at residues 24–27 (CTCS) and 88–89 (ES). Intrachain disulfides connect Cys24/Cys91, Cys26/Cys118, Cys36/Cys143, Cys145/Cys192, Cys150/Cys155, and Cys163/Cys184. An NTR domain is found at 24–143 (CTCSPSHPQD…GLNYRYHLGC (120 aa)). Positions 105-188 (TGRVYDGKMY…SKHYACIRQK (84 aa)) are mediates interaction with EFEMP1. Residue Asn207 is glycosylated (N-linked (GlcNAc...) asparagine).

The protein belongs to the protease inhibitor I35 (TIMP) family. As to quaternary structure, interacts with EFEMP1. Interacts with KDR.

It localises to the secreted. The protein resides in the extracellular space. It is found in the extracellular matrix. Its function is as follows. Mediates a variety of processes including matrix regulation and turnover, inflammation, and angiogenesis, through reversible inhibition of zinc protease superfamily enzymes, primarily matrix metalloproteinases (MMPs). Regulates extracellular matrix (ECM) remodeling through inhibition of matrix metalloproteinases (MMP) including MMP-1, MMP-2, MMP-3, MMP-7, MMP-9, MMP-13, MMP-14 and MMP-15. Additionally, modulates the processing of amyloid precursor protein (APP) and apolipoprotein E receptor ApoER2 by inhibiting two alpha-secretases ADAM10 and ADAM17. Functions as a tumor suppressor and a potent inhibitor of angiogenesis. Exerts its anti-angiogenic effect by directly interacting with vascular endothelial growth factor (VEGF) receptor-2/KDR, preventing its binding to the VEGFA ligand. Selectively induces apoptosis in angiogenic endothelial cells through a caspase-independent cell death pathway. Mechanistically, inhibits matrix-induced focal adhesion kinase PTK2 tyrosine phosphorylation and association with paxillin/PXN and disrupts the incorporation of ITGB3, PTK2 and PXN into focal adhesion contacts on the matrix. The polypeptide is Metalloproteinase inhibitor 3 (TIMP3) (Equus caballus (Horse)).